Consider the following 354-residue polypeptide: MKATLVLFLLAQVSWAGPFEQRGLFDFMLEDEASGIIPYDPDNPLISMCPYRCQCHLRVVQCSDLGLDKVPWEFPPDTTLLDLQNNKITEIKEGAFKNLKDLHTLILVNNKISKISPEAFKPLVKLERLYLSKNHLKELPEKLPKTLQELRLHDNEITKLKKSVFNGLNRMIVIELGGNPLKNSGIENGALQGMKGLGYIRISDTNITAIPQGLPTSISELHLDGNKIAKVDAASLKGMSNLSKLGLSFNSITVVENGSLANVPHLRELHLDNNKLLRVPAGLAQHKYVQVVYLHNNNISEVGQHDFCLPSYQTRKTSYTAVSLYSNPVRYWQIHPHTFRCVFGRSTIQLGNYK.

The N-terminal stretch at 1–16 (MKATLVLFLLAQVSWA) is a signal peptide. Residues 17–30 (GPFEQRGLFDFMLE) constitute a propeptide that is removed on maturation. O-linked (Xyl...) (glycosaminoglycan) serine glycosylation occurs at serine 34. Cystine bridges form between cysteine 49/cysteine 55 and cysteine 53/cysteine 62. LRR repeat units follow at residues 68-88 (DKVP…NNKI), 89-112 (TEIK…NNKI), 113-136 (SKIS…KNHL), 137-157 (KELP…DNEI), 158-181 (TKLK…GNPL), 182-207 (KNSG…DTNI), 208-228 (TAIP…GNKI), 229-252 (AKVD…FNSI), 253-276 (TVVE…NNKL), 277-299 (LRVP…NNNI), 300-329 (SEVG…SNPV), and 330-354 (RYWQ…GNYK). N-linked (GlcNAc...) asparagine glycosylation is present at asparagine 206. 3 N-linked (GlcNAc...) asparagine glycosylation sites follow: asparagine 241, asparagine 257, and asparagine 298. Cysteines 308 and 341 form a disulfide.

It belongs to the small leucine-rich proteoglycan (SLRP) family. SLRP class I subfamily. Binds to type I and type II collagen, fibronectin and TGF-beta. Forms a ternary complex with MFAP2 and ELN. Interacts with DPT. Post-translationally, the attached glycosaminoglycan chain can be either chondroitin sulfate or dermatan sulfate depending upon the tissue of origin.

The protein localises to the secreted. The protein resides in the extracellular space. Its subcellular location is the extracellular matrix. May affect the rate of fibrils formation. May be implicated in the dilatation of the rat cervix. The protein is Decorin (Dcn) of Rattus norvegicus (Rat).